We begin with the raw amino-acid sequence, 1026 residues long: Isoleucine--tRNA ligase (1026 aa).

Residues 51-61 (PTANGRPHIGH) carry the 'HIGH' region motif. The 'KMSKS' region signature appears at 591–595 (KMSKS). Lys594 is a binding site for ATP.

This sequence belongs to the class-I aminoacyl-tRNA synthetase family. IleS type 2 subfamily. Monomer. Zn(2+) is required as a cofactor.

The protein localises to the cytoplasm. It catalyses the reaction tRNA(Ile) + L-isoleucine + ATP = L-isoleucyl-tRNA(Ile) + AMP + diphosphate. Catalyzes the attachment of isoleucine to tRNA(Ile). As IleRS can inadvertently accommodate and process structurally similar amino acids such as valine, to avoid such errors it has two additional distinct tRNA(Ile)-dependent editing activities. One activity is designated as 'pretransfer' editing and involves the hydrolysis of activated Val-AMP. The other activity is designated 'posttransfer' editing and involves deacylation of mischarged Val-tRNA(Ile). The chain is Isoleucine--tRNA ligase from Thermoplasma acidophilum (strain ATCC 25905 / DSM 1728 / JCM 9062 / NBRC 15155 / AMRC-C165).